The following is a 695-amino-acid chain: A-kinase anchor protein 17A (695 aa).

The tract at residues 83–112 is PKA-RI and PKA-RII subunit binding domain; that stretch reads VENKSLVKSFLACLDGKTIKLSGFSDILKV. K118 participates in a covalent cross-link: Glycyl lysine isopeptide (Lys-Gly) (interchain with G-Cter in SUMO1); alternate. A Glycyl lysine isopeptide (Lys-Gly) (interchain with G-Cter in SUMO2); alternate cross-link involves residue K118. One can recognise an RRM domain in the interval 147–256; that stretch reads DTIHLEGLPC…KAVACNIKVS (110 aa). Residues 279 to 337 are disordered; the sequence is QELEQQREEQKRREKEAEERQRAEERKQKELEELERERKREEKLRKREQKQRDRELRRN. The tract at residues 425-454 is PKA-RI-alpha subunit binding domain; sequence LGLQRKERELRERLLSILLSKKPDDSHTHD. Positions 482–695 are disordered; that stretch reads TTLHPLGGQP…PSRHRSTWNR (214 aa). Position 537 is a phosphoserine (S537). Residues 567-585 show a composition bias toward basic and acidic residues; that stretch reads VSRKDTRSEQDKCNREPSK. 2 stretches are compositionally biased toward basic residues: residues 598-609 and 618-628; these read RHKRERSRARRA and RKERRPHKKHA. The segment covering 629 to 644 has biased composition (basic and acidic residues); that stretch reads YKDDSPRRRSTSPDHT. Phosphoserine is present on S633. 2 stretches are compositionally biased toward basic residues: residues 645–658 and 666–695; these read RSRRSHSKDRHRRE and SASRKHSRHRRRSERSRSRSPSRHRSTWNR.

Monomer. Component of the spliceosome. Interacts with ZRANB2 and SFRS1/ASF through its Arg/Ser-rich domain. Interacts with RI and RII subunits of PKA. Widely expressed. Found in heart, brain, lung, liver, skeletal muscle, kidney and pancreas. Expressed in activated B-cells and placenta. Expressed in all cell lines tested including Jurkat-TAg, U-937 and HEK293 cells.

The protein localises to the nucleus speckle. Functionally, splice factor regulating alternative splice site selection for certain mRNA precursors. Mediates regulation of pre-mRNA splicing in a PKA-dependent manner. The sequence is that of A-kinase anchor protein 17A (AKAP17A) from Homo sapiens (Human).